A 2171-amino-acid polypeptide reads, in one-letter code: ATP-binding cassette sub-family C member Sur (2171 aa).

Residues 1 to 36 (MKQLFNIIHCDHLNGHVRSIYDNLNTDICGIDRVRR) lie on the Extracellular side of the membrane. A helical transmembrane segment spans residues 37-57 (VFTFFSIFLLLFGLMFVCSRY). Residues 58-71 (KKCHKTLLTFHNGR) are Cytoplasmic-facing. The helical transmembrane segment at 72–92 (AAISLLLLALNSFDLARIFLP) threads the bilayer. The Extracellular portion of the chain corresponds to 93–112 (HQNVRNLNRLFQSSPRDLNY). A helical transmembrane segment spans residues 113–133 (LVVIGSGELWNALFSTLLTLM). The Cytoplasmic portion of the chain corresponds to 134–145 (LMLYHRMVERKK). A helical transmembrane segment spans residues 146–166 (ATVFLYASTAVEALTFALLSN). Over 167 to 182 (ELFELVRYEDFLELQT) the chain is Extracellular. A helical membrane pass occupies residues 183-203 (CLVAMSAMCMVSLAMLDGLTV). The Cytoplasmic segment spans residues 204–224 (YKECYHDDYLDDYGKIGYKHS). A helical transmembrane segment spans residues 225–245 (MATFYSKSCFWWLTPLLWLGY). Residues 246 to 299 (KEPLELEDLGQMKLEDSARSHYDHFLYIYTEKKKKSNSSPSLWYCYIKNSWQMF) lie on the Extracellular side of the membrane. Residues 300–320 (ALGGILKLAGDLFALIGPLAI) traverse the membrane as a helical segment. The Cytoplasmic segment spans residues 321–447 (QKIVEYIEQL…MTEDTRNIME (127 aa)). Residues 344 to 622 (NEVANVLLST…FPITVPIIIA (279 aa)) form the ABC transmembrane type-1 1 domain. A disordered region spans residues 388–434 (DSSDSAGQVQSTSSTSDEKQKNDDSMATPEHVDNPSEPNISHDIGSI). Residues 389–402 (SSDSAGQVQSTSST) show a composition bias toward polar residues. Over residues 403-421 (SDEKQKNDDSMATPEHVDN) the composition is skewed to basic and acidic residues. Residues 448–468 (FFLIIHYAWAIPFKIAVVIYL) form a helical membrane-spanning segment. Over 469 to 474 (LYMNLG) the chain is Extracellular. The helical transmembrane segment at 475-495 (ISAVIGSIACIVIMTPLQFFI) threads the bilayer. At 496-562 (GNAMSKNAEV…KDATFWTLMA (67 aa)) the chain is on the cytoplasmic side. The chain crosses the membrane as a helical span at residues 563-583 (VLTHIATVLITFVTLGVYVWL). Residues 584–600 (HRDQEFDLNASRLFSSL) are Extracellular-facing. The chain crosses the membrane as a helical span at residues 601–621 (ALFQQLTVPLLIFPITVPIII). Residues 622–1409 (AARVSTRRLE…KYGKISDDIY (788 aa)) are Cytoplasmic-facing. The ABC transporter 1 domain occupies 785–1014 (VSINDGLFTW…QPRITAEWNA (230 aa)). Residue 822–829 (GKNGSGKT) coordinates ATP. A compositionally biased stretch (basic residues) spans 1141 to 1151 (RRRHTLGRRGS). 2 disordered regions span residues 1141 to 1177 (RRRH…SISG) and 1209 to 1265 (PRVQ…DHVR). Positions 1160-1176 (LSGLSTLTATSESSSIS) are enriched in low complexity. The span at 1212–1232 (QSWQPPQHVTHHQPLSRNASS) shows a compositional bias: polar residues. A compositionally biased stretch (basic and acidic residues) spans 1242 to 1251 (DVKKSEEARR). The helical transmembrane segment at 1410 to 1430 (LMYIRAAGLPIITIFFITALI) threads the bilayer. In terms of domain architecture, ABC transmembrane type-1 2 spans 1421 to 1715 (ITIFFITALI…AVTKSPSELR (295 aa)). At 1431–1468 (WQCLRVYTDIWLQQWSNVHGRVASKGHVVLHPSEQDHE) the chain is on the extracellular side. A helical transmembrane segment spans residues 1469–1489 (VTYYFRMYAAISCVCIIMALV). Over 1490–1558 (STPAGQYAGC…QRLLQFTLLC (69 aa)) the chain is Cytoplasmic. The chain crosses the membrane as a helical span at residues 1559–1579 (LSAILINVTITPWILVLTLPI). Residues 1580-1655 (CGAYYLIQKF…YALLNTSHRW (76 aa)) lie on the Extracellular side of the membrane. Residues 1656–1676 (LGVSLDYLGGCIVFVATVTAL) form a helical membrane-spanning segment. Topologically, residues 1677 to 1718 (TAASVSCRRHYEATTSPSASASPSPFETYAVTKSPSELRPSP) are cytoplasmic. A helical transmembrane segment spans residues 1719 to 1739 (SLVGLAINYTLLVPIYLNWVV). The Extracellular segment spans residues 1740–2171 (KLLADMEMYA…GLLEKGASKW (432 aa)). A compositionally biased stretch (acidic residues) spans 1766-1778 (ADADADADADVDA). Disordered stretches follow at residues 1766–1844 (ADAD…GHEN) and 1866–1902 (NFHH…DKDK). 2 stretches are compositionally biased toward basic and acidic residues: residues 1793–1804 (EVDRSSQSDAGD) and 1887–1902 (VIKD…DKDK). Residues 1930–2165 (IHFDNVSLRY…EGSVFRGLLE (236 aa)) form the ABC transporter 2 domain. Residue 1964-1971 (GRTGSGKS) participates in ATP binding.

The protein belongs to the ABC transporter superfamily. ABCC family. Conjugate transporter (TC 3.A.1.208) subfamily. Highly expressed in adult heart. Detected at lower levels in head and abdomen.

The protein localises to the membrane. Its function is as follows. May function as regulatory subunit of ATP-sensitive potassium channels (KATP) and form KATP channels with a member of the ATP-sensitive inward rectifier potassium channel family. May also have channel activity by itself (in vitro). May protect the heart during hypoxia. May protect against heart failure under conditions of tachycardic stress. This Drosophila melanogaster (Fruit fly) protein is ATP-binding cassette sub-family C member Sur (Sur).